The following is a 250-amino-acid chain: Small ribosomal subunit protein uS3 (250 aa).

In terms of domain architecture, KH type-2 spans 39 to 111 (IRTLIKNNYP…KVQINIFEVK (73 aa)).

Belongs to the universal ribosomal protein uS3 family. In terms of assembly, part of the 30S ribosomal subunit. Forms a tight complex with proteins S10 and S14.

Its function is as follows. Binds the lower part of the 30S subunit head. Binds mRNA in the 70S ribosome, positioning it for translation. This Alder yellows phytoplasma protein is Small ribosomal subunit protein uS3.